A 750-amino-acid polypeptide reads, in one-letter code: Photosystem I P700 chlorophyll a apoprotein A1 (750 aa).

The next 8 helical transmembrane spans lie at 70-93 (VFSAHFGQLSIIFLWLSGMYFHGA), 156-179 (LYCTAIGALVFAALMLFAGWFHYH), 195-219 (LNHHLAGLLGLGSLSWAGHQVHVSL), 291-309 (IAHHHLAIAILFLIAGHMY), 346-369 (WHAQLSLNLAMLGSLTIVVAHHMY), 385-411 (LSLFTHHMWIGGFLIVGAAAHAAIFMV), 433-455 (AIISHLNWVCIFLGFHSFGLYIH), and 531-549 (FLVHHIHAFTIHVTVLILL). [4Fe-4S] cluster contacts are provided by C573 and C582. Helical transmembrane passes span 589-610 (HVFLGLFWMYNAISVVIFHFSW) and 664-686 (LSAYGLFFLGAHFVWAFSLMFLF). Position 675 (H675) interacts with chlorophyll a'. Chlorophyll a contacts are provided by M683 and Y691. W692 provides a ligand contact to phylloquinone. A helical membrane pass occupies residues 724–744 (AVGVTHYLLGGIATTWAFFLA).

It belongs to the PsaA/PsaB family. As to quaternary structure, the PsaA/B heterodimer binds the P700 chlorophyll special pair and subsequent electron acceptors. PSI consists of a core antenna complex that captures photons, and an electron transfer chain that converts photonic excitation into a charge separation. The eukaryotic PSI reaction center is composed of at least 11 subunits. The cofactor is P700 is a chlorophyll a/chlorophyll a' dimer, A0 is one or more chlorophyll a, A1 is one or both phylloquinones and FX is a shared 4Fe-4S iron-sulfur center..

Its subcellular location is the plastid. It localises to the chloroplast thylakoid membrane. It carries out the reaction reduced [plastocyanin] + hnu + oxidized [2Fe-2S]-[ferredoxin] = oxidized [plastocyanin] + reduced [2Fe-2S]-[ferredoxin]. PsaA and PsaB bind P700, the primary electron donor of photosystem I (PSI), as well as the electron acceptors A0, A1 and FX. PSI is a plastocyanin-ferredoxin oxidoreductase, converting photonic excitation into a charge separation, which transfers an electron from the donor P700 chlorophyll pair to the spectroscopically characterized acceptors A0, A1, FX, FA and FB in turn. Oxidized P700 is reduced on the lumenal side of the thylakoid membrane by plastocyanin. This Draba nemorosa (Woodland whitlowgrass) protein is Photosystem I P700 chlorophyll a apoprotein A1.